Here is a 364-residue protein sequence, read N- to C-terminus: Zinc transporter 3 (364 aa).

The N-terminal stretch at 1–23 (MGAKKHTLQVLPWLLLFAQHTAA) is a signal peptide. The Extracellular portion of the chain corresponds to 24-44 (SACDCANTTDGADRQGAMKLK). An N-linked (GlcNAc...) asparagine glycan is attached at Asn-30. Residues 45-65 (LIAIASILAAGAAGVLVPVIG) traverse the membrane as a helical segment. At 66-76 (RSMAALRPDGD) the chain is on the cytoplasmic side. The chain crosses the membrane as a helical span at residues 77–97 (IFFAVKAFAAGVILATGMVHI). Residues 98-119 (LPAAFDALTSPCLKRGGGDRNP) are Extracellular-facing. Residues 120–140 (FPFAGLVSMSAAVSTMVVDSL) traverse the membrane as a helical segment. Topologically, residues 141 to 213 (AAGYYHRSQF…ESIRHKVVSQ (73 aa)) are cytoplasmic. Residues 214-234 (VLELGILVHSVIIGVSLGASV) form a helical membrane-spanning segment. The Extracellular segment spans residues 235-241 (RPSTIRP). Residues 242–262 (LVGALSFHQFFEGVGLGGCIV) traverse the membrane as a helical segment. Residues 263 to 271 (QANFKVRAT) are Cytoplasmic-facing. A helical transmembrane segment spans residues 272 to 292 (VIMAIFFSLTAPVGIVLGIAI). Residues 293–303 (SSSYNVHSSTA) lie on the Extracellular side of the membrane. A helical membrane pass occupies residues 304–324 (FVVEGVFNSASAGILIYMSLV). The Cytoplasmic segment spans residues 325-343 (DLLATDFNNPKLQINTKLQ). A helical transmembrane segment spans residues 344–364 (LMAYLALFLGAGLMSMLAIWA).

The protein belongs to the ZIP transporter (TC 2.A.5) family. In terms of tissue distribution, expressed in vascular bundles of stems.

The protein localises to the cell membrane. Functionally, zinc transporter that may mediate zinc uptake from the rhizosphere. Seems specific to zinc ions and may not transport other divalent cations. The polypeptide is Zinc transporter 3 (ZIP3) (Oryza sativa subsp. japonica (Rice)).